We begin with the raw amino-acid sequence, 100 residues long: MKLTPREKDKLLIFTAALLAERRRARGLKLNYPEAIAFITAALMEAARDGKTVAEVMHYGTTLLTRDDVMEGVPEMIPDIQVEATFPDGTKLVTVHHPIP.

It belongs to the urease gamma subunit family. Heterotrimer of UreA (gamma), UreB (beta) and UreC (alpha) subunits. Three heterotrimers associate to form the active enzyme.

The protein localises to the cytoplasm. The enzyme catalyses urea + 2 H2O + H(+) = hydrogencarbonate + 2 NH4(+). The protein operates within nitrogen metabolism; urea degradation; CO(2) and NH(3) from urea (urease route): step 1/1. The polypeptide is Urease subunit gamma (Paraburkholderia xenovorans (strain LB400)).